A 130-amino-acid polypeptide reads, in one-letter code: Small ribosomal subunit protein uS8 (130 aa).

This sequence belongs to the universal ribosomal protein uS8 family. In terms of assembly, part of the 30S ribosomal subunit. Contacts proteins S5 and S12.

One of the primary rRNA binding proteins, it binds directly to 16S rRNA central domain where it helps coordinate assembly of the platform of the 30S subunit. This Marinomonas sp. (strain MWYL1) protein is Small ribosomal subunit protein uS8.